The following is a 206-amino-acid chain: Large ribosomal subunit protein uL4 (206 aa).

Positions 49 to 76 (QSAKTRTEVRGGGIKPWRQKGTGRARQG) are disordered.

This sequence belongs to the universal ribosomal protein uL4 family. As to quaternary structure, part of the 50S ribosomal subunit.

One of the primary rRNA binding proteins, this protein initially binds near the 5'-end of the 23S rRNA. It is important during the early stages of 50S assembly. It makes multiple contacts with different domains of the 23S rRNA in the assembled 50S subunit and ribosome. Functionally, forms part of the polypeptide exit tunnel. This Clostridium botulinum (strain Alaska E43 / Type E3) protein is Large ribosomal subunit protein uL4.